A 203-amino-acid polypeptide reads, in one-letter code: Proteasome subunit beta 1 (203 aa).

Positions 1-7 (MAEKLKG) are cleaved as a propeptide — removed in mature form; by autocatalysis. T8 functions as the Nucleophile in the catalytic mechanism.

The protein belongs to the peptidase T1B family. As to quaternary structure, the 20S proteasome core is composed of 14 alpha and 14 beta subunits that assemble into four stacked heptameric rings, resulting in a barrel-shaped structure. The two inner rings, each composed of seven catalytic beta subunits, are sandwiched by two outer rings, each composed of seven alpha subunits. The catalytic chamber with the active sites is on the inside of the barrel. Has a gated structure, the ends of the cylinder being occluded by the N-termini of the alpha-subunits. Is capped at one or both ends by the proteasome regulatory ATPase, PAN.

The protein resides in the cytoplasm. The enzyme catalyses Cleavage of peptide bonds with very broad specificity.. With respect to regulation, the formation of the proteasomal ATPase PAN-20S proteasome complex, via the docking of the C-termini of PAN into the intersubunit pockets in the alpha-rings, triggers opening of the gate for substrate entry. Interconversion between the open-gate and close-gate conformations leads to a dynamic regulation of the 20S proteasome proteolysis activity. In terms of biological role, component of the proteasome core, a large protease complex with broad specificity involved in protein degradation. The polypeptide is Proteasome subunit beta 1 (Thermococcus onnurineus (strain NA1)).